The chain runs to 83 residues: Large ribosomal subunit protein eL31 (83 aa).

It belongs to the eukaryotic ribosomal protein eL31 family.

The sequence is that of Large ribosomal subunit protein eL31 from Methanococcus aeolicus (strain ATCC BAA-1280 / DSM 17508 / OCM 812 / Nankai-3).